A 203-amino-acid chain; its full sequence is Holliday junction branch migration complex subunit RuvA (203 aa).

The domain I stretch occupies residues 1 to 64; sequence MIGRLNGILV…EDAQLLYGFI (64 aa). The domain II stretch occupies residues 65-143; it reads TKQERALFRL…SLLEASVGNE (79 aa). Residues 144 to 154 form a flexible linker region; the sequence is REFMLQTNYTA. The segment at 155 to 203 is domain III; that stretch reads PAANAEEDAISALVSLGYKPPQASRAVSKAYKEGMDTETLIKLALKSML.

The protein belongs to the RuvA family. In terms of assembly, homotetramer. Forms an RuvA(8)-RuvB(12)-Holliday junction (HJ) complex. HJ DNA is sandwiched between 2 RuvA tetramers; dsDNA enters through RuvA and exits via RuvB. An RuvB hexamer assembles on each DNA strand where it exits the tetramer. Each RuvB hexamer is contacted by two RuvA subunits (via domain III) on 2 adjacent RuvB subunits; this complex drives branch migration. In the full resolvosome a probable DNA-RuvA(4)-RuvB(12)-RuvC(2) complex forms which resolves the HJ.

It is found in the cytoplasm. The RuvA-RuvB-RuvC complex processes Holliday junction (HJ) DNA during genetic recombination and DNA repair, while the RuvA-RuvB complex plays an important role in the rescue of blocked DNA replication forks via replication fork reversal (RFR). RuvA specifically binds to HJ cruciform DNA, conferring on it an open structure. The RuvB hexamer acts as an ATP-dependent pump, pulling dsDNA into and through the RuvAB complex. HJ branch migration allows RuvC to scan DNA until it finds its consensus sequence, where it cleaves and resolves the cruciform DNA. This is Holliday junction branch migration complex subunit RuvA from Shewanella denitrificans (strain OS217 / ATCC BAA-1090 / DSM 15013).